The following is a 436-amino-acid chain: MAKPVVAIVGRPNVGKSTIFNRIVGERVSIVEDVPGVTRDRIYNSAEWLGKEFNIIDTGGIDLSDEPFLEQIRAQAEIAIDEADVIIFITNGREGVTDADEQVAKILYRSNKPIVLAINKVDNPEMRDQIYDFYSLGFGEPYPISGSHGLGLGDMLDAVRAHFPKEEEEEYPDETVKFSLIGRPNVGKSSILNALLGEDRVIVSDIAGTTRDAIDTTYTFDGQDYVMIDTAGMRKRGKVYESTEKYSVLRAMRAIERSDVVLVVINAEEGIREQDKRIAGYAHDAGRAIIIVVNKWDAINKDEKTINVWTEDIREQFQFLSYAPIVFVSAKTKQRLNNLFPLINQVSDNHSLRVQSSMLNDVISDAVAMNPSPMDKGKRLKIFYTTQVAVKPPTFVVFVNDPELMHFSYERFLENRIREAFPFDGTPIRVIARKRK.

2 consecutive EngA-type G domains span residues Pro-4–Glu-167 and Val-176–Ser-351. GTP is bound by residues Gly-10 to Ser-17, Asp-57 to Ile-61, Asn-119 to Asp-122, Gly-182 to Ser-189, Asp-229 to Met-233, and Asn-294 to Asp-297. The KH-like domain maps to Leu-352–Lys-436.

It belongs to the TRAFAC class TrmE-Era-EngA-EngB-Septin-like GTPase superfamily. EngA (Der) GTPase family. As to quaternary structure, associates with the 50S ribosomal subunit.

GTPase that plays an essential role in the late steps of ribosome biogenesis. This Listeria innocua serovar 6a (strain ATCC BAA-680 / CLIP 11262) protein is GTPase Der.